We begin with the raw amino-acid sequence, 117 residues long: Immunoglobulin heavy variable 5-51 (117 aa).

Positions 1-19 (MGSTAILALLLAVLQGVCA) are cleaved as a signal peptide. A framework-1 region spans residues 20 to 44 (EVQLVQSGAEVKKPGESLKISCKGS). The Ig-like domain maps to 20–117 (EVQLVQSGAE…SDTAMYYCAR (98 aa)). The cysteines at positions 41 and 115 are disulfide-linked. Residues 45–52 (GYSFTSYW) form a complementarity-determining-1 region. The tract at residues 53 to 69 (IGWVRQMPGKGLEWMGI) is framework-2. The tract at residues 70-77 (IYPGDSDT) is complementarity-determining-2. A framework-3 region spans residues 78–115 (RYSPSFQGQVTISADKSISTAYLQWSSLKASDTAMYYC). The interval 116-117 (AR) is complementarity-determining-3.

As to quaternary structure, immunoglobulins are composed of two identical heavy chains and two identical light chains; disulfide-linked.

The protein resides in the secreted. The protein localises to the cell membrane. In terms of biological role, v region of the variable domain of immunoglobulin heavy chains that participates in the antigen recognition. Immunoglobulins, also known as antibodies, are membrane-bound or secreted glycoproteins produced by B lymphocytes. In the recognition phase of humoral immunity, the membrane-bound immunoglobulins serve as receptors which, upon binding of a specific antigen, trigger the clonal expansion and differentiation of B lymphocytes into immunoglobulins-secreting plasma cells. Secreted immunoglobulins mediate the effector phase of humoral immunity, which results in the elimination of bound antigens. The antigen binding site is formed by the variable domain of one heavy chain, together with that of its associated light chain. Thus, each immunoglobulin has two antigen binding sites with remarkable affinity for a particular antigen. The variable domains are assembled by a process called V-(D)-J rearrangement and can then be subjected to somatic hypermutations which, after exposure to antigen and selection, allow affinity maturation for a particular antigen. This chain is Immunoglobulin heavy variable 5-51, found in Homo sapiens (Human).